A 360-amino-acid chain; its full sequence is Phospho-N-acetylmuramoyl-pentapeptide-transferase (360 aa).

10 consecutive transmembrane segments (helical) span residues threonine 25–aspartate 45, threonine 71–alanine 91, leucine 94–tyrosine 114, serine 129–leucine 148, threonine 168–glycine 188, glycine 199–alanine 219, leucine 239–proline 259, isoleucine 263–alanine 283, phenylalanine 288–valine 308, and glutamine 337–leucine 357.

This sequence belongs to the glycosyltransferase 4 family. MraY subfamily. The cofactor is Mg(2+).

It localises to the cell inner membrane. It carries out the reaction UDP-N-acetyl-alpha-D-muramoyl-L-alanyl-gamma-D-glutamyl-meso-2,6-diaminopimeloyl-D-alanyl-D-alanine + di-trans,octa-cis-undecaprenyl phosphate = di-trans,octa-cis-undecaprenyl diphospho-N-acetyl-alpha-D-muramoyl-L-alanyl-D-glutamyl-meso-2,6-diaminopimeloyl-D-alanyl-D-alanine + UMP. It functions in the pathway cell wall biogenesis; peptidoglycan biosynthesis. Functionally, catalyzes the initial step of the lipid cycle reactions in the biosynthesis of the cell wall peptidoglycan: transfers peptidoglycan precursor phospho-MurNAc-pentapeptide from UDP-MurNAc-pentapeptide onto the lipid carrier undecaprenyl phosphate, yielding undecaprenyl-pyrophosphoryl-MurNAc-pentapeptide, known as lipid I. The chain is Phospho-N-acetylmuramoyl-pentapeptide-transferase from Rhodopseudomonas palustris (strain BisA53).